We begin with the raw amino-acid sequence, 674 residues long: 1,4-alpha-glucan branching enzyme GlgB 1 (674 aa).

D336 functions as the Nucleophile in the catalytic mechanism. E389 serves as the catalytic Proton donor.

This sequence belongs to the glycosyl hydrolase 13 family. GlgB subfamily. Monomer.

It catalyses the reaction Transfers a segment of a (1-&gt;4)-alpha-D-glucan chain to a primary hydroxy group in a similar glucan chain.. The protein operates within glycan biosynthesis; glycogen biosynthesis. In terms of biological role, catalyzes the formation of the alpha-1,6-glucosidic linkages in glycogen by scission of a 1,4-alpha-linked oligosaccharide from growing alpha-1,4-glucan chains and the subsequent attachment of the oligosaccharide to the alpha-1,6 position. In Clostridium perfringens (strain SM101 / Type A), this protein is 1,4-alpha-glucan branching enzyme GlgB 1.